The primary structure comprises 351 residues: Transcription factor Atoh1 (351 aa).

Disordered regions lie at residues 16-39 (LGDHHRHPQPHHVPPLTPQPPATL) and 89-116 (EAAAPRDEADSQGELVRRSGCGGLSKSP). Pro residues predominate over residues 26–36 (HHVPPLTPQPP). In terms of domain architecture, bHLH spans 156 to 208 (QRRLAANARERRRMHGLNHAFDQLRNVIPSFNNDKKLSKYETLQMAQIYINAL). 2 disordered regions span residues 244–278 (GAGASAVAGAQPAPGGGPRPTPPGPCRTRFSGPAS) and 308–351 (LSPS…DEAS). Residues 247–256 (ASAVAGAQPA) are compositionally biased toward low complexity. Over residues 258–268 (GGGPRPTPPGP) the composition is skewed to pro residues. Residues 332-351 (HRSDGEFSPHSHYSDSDEAS) show a composition bias toward basic and acidic residues.

As to quaternary structure, efficient DNA binding requires dimerization with another bHLH protein. As to expression, developing nervous system, and in adult epithelial cells of the gastrointestinal tract.

Its subcellular location is the nucleus. In terms of biological role, transcriptional regulator. Activates E box-dependent transcription in collaboration with TCF3/E47, but the activity is completely antagonized by the negative regulator of neurogenesis HES1. Plays a role in the differentiation of subsets of neural cells by activating E box-dependent transcription. The protein is Transcription factor Atoh1 of Mus musculus (Mouse).